Reading from the N-terminus, the 778-residue chain is Lon protease (778 aa).

One can recognise a Lon N-terminal domain in the interval 6–207 (LPLMALRDMV…TVISTLTSNI (202 aa)). 356–363 (GPPGVGKT) serves as a coordination point for ATP. Positions 592–773 (EDQIGSTTGL…DQVLKHALVE (182 aa)) constitute a Lon proteolytic domain. Catalysis depends on residues Ser679 and Lys722.

This sequence belongs to the peptidase S16 family. Homohexamer. Organized in a ring with a central cavity.

Its subcellular location is the cytoplasm. The catalysed reaction is Hydrolysis of proteins in presence of ATP.. Functionally, ATP-dependent serine protease that mediates the selective degradation of mutant and abnormal proteins as well as certain short-lived regulatory proteins. Required for cellular homeostasis and for survival from DNA damage and developmental changes induced by stress. Degrades polypeptides processively to yield small peptide fragments that are 5 to 10 amino acids long. Binds to DNA in a double-stranded, site-specific manner. This is Lon protease from Rickettsia felis (strain ATCC VR-1525 / URRWXCal2) (Rickettsia azadi).